The chain runs to 197 residues: 7-methyl-GTP pyrophosphatase (197 aa).

The Proton acceptor role is filled by D69.

Belongs to the Maf family. YceF subfamily. A divalent metal cation is required as a cofactor.

Its subcellular location is the cytoplasm. The catalysed reaction is N(7)-methyl-GTP + H2O = N(7)-methyl-GMP + diphosphate + H(+). Nucleoside triphosphate pyrophosphatase that hydrolyzes 7-methyl-GTP (m(7)GTP). May have a dual role in cell division arrest and in preventing the incorporation of modified nucleotides into cellular nucleic acids. This Pectobacterium atrosepticum (strain SCRI 1043 / ATCC BAA-672) (Erwinia carotovora subsp. atroseptica) protein is 7-methyl-GTP pyrophosphatase.